Reading from the N-terminus, the 441-residue chain is GTPase Der (441 aa).

EngA-type G domains follow at residues H2–D164 and I173–Q343. Residues G8–S15, D55–L59, N116–D119, G179–S186, D226–I230, and N288–D291 each bind GTP.

This sequence belongs to the TRAFAC class TrmE-Era-EngA-EngB-Septin-like GTPase superfamily. EngA (Der) GTPase family. In terms of assembly, associates with the 50S ribosomal subunit.

GTPase that plays an essential role in the late steps of ribosome biogenesis. The protein is GTPase Der of Deinococcus deserti (strain DSM 17065 / CIP 109153 / LMG 22923 / VCD115).